A 184-amino-acid chain; its full sequence is Peptidyl-tRNA hydrolase (184 aa).

Tyr-14 serves as a coordination point for tRNA. Residue His-19 is the Proton acceptor of the active site. Residues Phe-64, Asn-66, and Asn-112 each contribute to the tRNA site.

It belongs to the PTH family. Monomer.

It is found in the cytoplasm. The enzyme catalyses an N-acyl-L-alpha-aminoacyl-tRNA + H2O = an N-acyl-L-amino acid + a tRNA + H(+). Hydrolyzes ribosome-free peptidyl-tRNAs (with 1 or more amino acids incorporated), which drop off the ribosome during protein synthesis, or as a result of ribosome stalling. In terms of biological role, catalyzes the release of premature peptidyl moieties from peptidyl-tRNA molecules trapped in stalled 50S ribosomal subunits, and thus maintains levels of free tRNAs and 50S ribosomes. The chain is Peptidyl-tRNA hydrolase from Thermoanaerobacter pseudethanolicus (strain ATCC 33223 / 39E) (Clostridium thermohydrosulfuricum).